Reading from the N-terminus, the 224-residue chain is Artemin (224 aa).

An N-terminal signal peptide occupies residues 1 to 39 (MELGLGEPTALSHCLRPRWQPALWPTLAALALLSSVTEA). The propeptide occupies 40–111 (SLDPMSRSPA…AALRGARAAR (72 aa)). The tract at residues 41-124 (LDPMSRSPAS…RSSRARATDA (84 aa)) is disordered. Pro residues predominate over residues 80-95 (RPPPQSPQPAPPPPGP). Residues 96 to 116 (ALQSPPAALRGARAARAGTRS) show a composition bias toward low complexity. Cystine bridges form between Cys-127–Cys-192, Cys-154–Cys-220, and Cys-158–Cys-222. An N-linked (GlcNAc...) asparagine glycan is attached at Asn-206.

The protein belongs to the TGF-beta family. GDNF subfamily. As to quaternary structure, homodimer; disulfide-linked. Interacts with GFRA3 coreceptor and RET: forms a 2:2:2 ternary complex composed of ARTN ligand, GFRA3 and RET receptor. In terms of tissue distribution, cochlea. Expressed at higher level in sesorineural epithelium than in the modiolus region or substantia nigra.

It localises to the secreted. In terms of biological role, growth factor that supports the survival of sensory and sympathetic peripheral neurons in culture and also supports the survival of dopaminergic neurons of the ventral mid-brain. Acts by binding to its coreceptor, GFRA3, leading to autophosphorylation and activation of the RET receptor. Strong attractant of gut hematopoietic cells thus promoting the formation Peyer's patch-like structures, a major component of the gut-associated lymphoid tissue. In Rattus norvegicus (Rat), this protein is Artemin (Artn).